The primary structure comprises 312 residues: Acetaldehyde dehydrogenase 4 (312 aa).

12 to 15 serves as a coordination point for NAD(+); the sequence is SGNI. Cys-132 acts as the Acyl-thioester intermediate in catalysis. NAD(+)-binding positions include 163-171 and Asn-290; that span reads SAGPGTRAN.

It belongs to the acetaldehyde dehydrogenase family.

The catalysed reaction is acetaldehyde + NAD(+) + CoA = acetyl-CoA + NADH + H(+). The sequence is that of Acetaldehyde dehydrogenase 4 from Azotobacter vinelandii (strain DJ / ATCC BAA-1303).